The primary structure comprises 267 residues: Serine acetyltransferase (267 aa).

This sequence belongs to the transferase hexapeptide repeat family.

The protein localises to the cytoplasm. It catalyses the reaction L-serine + acetyl-CoA = O-acetyl-L-serine + CoA. The protein operates within amino-acid biosynthesis; L-cysteine biosynthesis; L-cysteine from L-serine: step 1/2. The polypeptide is Serine acetyltransferase (cysE) (Haemophilus influenzae (strain ATCC 51907 / DSM 11121 / KW20 / Rd)).